The sequence spans 130 residues: Small ribosomal subunit protein uS11c (130 aa).

It belongs to the universal ribosomal protein uS11 family. Part of the 30S ribosomal subunit.

Its subcellular location is the plastid. It localises to the chloroplast. This Pinus koraiensis (Korean pine) protein is Small ribosomal subunit protein uS11c.